The chain runs to 300 residues: Pantoate kinase (300 aa).

It belongs to the GHMP kinase family. PoK subfamily. In terms of assembly, homodimer.

The enzyme catalyses (R)-pantoate + ATP = (R)-4-phosphopantoate + ADP + H(+). It participates in cofactor biosynthesis; coenzyme A biosynthesis. Its activity is regulated as follows. Moderately stimulated in the presence of potassium cations. Inhibited by increasing concentrations of pantoate. Activity is not affected by CoA/acetyl-CoA. Its function is as follows. Phosphorylates (R)-pantoate to form (R)-4-phosphopantoate in the CoA biosynthesis pathway. Displays broad nucleotide specificity and utilizes ATP, GTP, UTP, and CTP with comparable catalytic efficiencies. The protein is Pantoate kinase of Thermococcus kodakarensis (strain ATCC BAA-918 / JCM 12380 / KOD1) (Pyrococcus kodakaraensis (strain KOD1)).